The sequence spans 277 residues: Phosphonoacetaldehyde hydrolase-like protein (277 aa).

Belongs to the HAD-like hydrolase superfamily. PhnX family.

In Syntrophobacter fumaroxidans (strain DSM 10017 / MPOB), this protein is Phosphonoacetaldehyde hydrolase-like protein (phnX2).